Reading from the N-terminus, the 680-residue chain is DNA-directed RNA polymerase subunit beta' (680 aa).

Positions 69, 71, 87, and 90 each coordinate Zn(2+). Residues aspartate 489, aspartate 491, and aspartate 493 each coordinate Mg(2+).

This sequence belongs to the RNA polymerase beta' chain family. RpoC1 subfamily. In plastids the minimal PEP RNA polymerase catalytic core is composed of four subunits: alpha, beta, beta', and beta''. When a (nuclear-encoded) sigma factor is associated with the core the holoenzyme is formed, which can initiate transcription. The cofactor is Mg(2+). Requires Zn(2+) as cofactor.

The protein localises to the plastid. Its subcellular location is the chloroplast. The enzyme catalyses RNA(n) + a ribonucleoside 5'-triphosphate = RNA(n+1) + diphosphate. DNA-dependent RNA polymerase catalyzes the transcription of DNA into RNA using the four ribonucleoside triphosphates as substrates. The chain is DNA-directed RNA polymerase subunit beta' from Ranunculus macranthus (Large buttercup).